Here is a 204-residue protein sequence, read N- to C-terminus: Peptidyl-tRNA hydrolase (204 aa).

Tyr14 contributes to the tRNA binding site. Catalysis depends on His19, which acts as the Proton acceptor. Positions 64, 66, and 112 each coordinate tRNA.

This sequence belongs to the PTH family. As to quaternary structure, monomer.

Its subcellular location is the cytoplasm. The enzyme catalyses an N-acyl-L-alpha-aminoacyl-tRNA + H2O = an N-acyl-L-amino acid + a tRNA + H(+). Hydrolyzes ribosome-free peptidyl-tRNAs (with 1 or more amino acids incorporated), which drop off the ribosome during protein synthesis, or as a result of ribosome stalling. In terms of biological role, catalyzes the release of premature peptidyl moieties from peptidyl-tRNA molecules trapped in stalled 50S ribosomal subunits, and thus maintains levels of free tRNAs and 50S ribosomes. The sequence is that of Peptidyl-tRNA hydrolase from Azorhizobium caulinodans (strain ATCC 43989 / DSM 5975 / JCM 20966 / LMG 6465 / NBRC 14845 / NCIMB 13405 / ORS 571).